We begin with the raw amino-acid sequence, 64 residues long: Large ribosomal subunit protein bL35 (64 aa).

The segment at 1–28 (MPKMKTHSGAKKRFKLTGSGKLKRQQAN) is disordered.

It belongs to the bacterial ribosomal protein bL35 family.

In Renibacterium salmoninarum (strain ATCC 33209 / DSM 20767 / JCM 11484 / NBRC 15589 / NCIMB 2235), this protein is Large ribosomal subunit protein bL35.